Consider the following 410-residue polypeptide: MQNKLASGARLGRQALLFPLCLVLYEFSTYIGADMIQPGMLAVVEQYQAGIDWVPTSMTAYLAGGMFLQWLLGPLSDRIGRRPVMLAGVVWFIITCLAILLAQNIEQFTLLRFLQGISLCFIGAVGYAAIQESFEEAVCIKITALMANVALIAPLLGPLVGAAWIHVLPWEGMFVLFAALAAISFFGLQRAMPETATRIGEKLSLKELGRDYKLVLKNGRFVAGALALGFVSLPLLAWIAQSPIIIITGEQLSSYEYGLLQVPIFGALIAGNLLLARLTSRRTVRSLIIMGGWPIMIGLLVAAAATVISSHAYLWMTAGLSIYAFGIGLANAGLVRLTLFASDMSKGTVSAAMGMLQMLIFTVGIEISKHAWLNGGNGQFNLFNLVNGILWLSLMVIFLKDKQMGNSHEG.

The Cytoplasmic segment spans residues 1–15 (MQNKLASGARLGRQA). The helical transmembrane segment at 16 to 36 (LLFPLCLVLYEFSTYIGADMI) threads the bilayer. At 37-52 (QPGMLAVVEQYQAGID) the chain is on the periplasmic side. The chain crosses the membrane as a helical span at residues 53–73 (WVPTSMTAYLAGGMFLQWLLG). Residues 74-82 (PLSDRIGRR) are Cytoplasmic-facing. Residues 83–103 (PVMLAGVVWFIITCLAILLAQ) form a helical membrane-spanning segment. The Periplasmic portion of the chain corresponds to 104 to 109 (NIEQFT). The chain crosses the membrane as a helical span at residues 110-130 (LLRFLQGISLCFIGAVGYAAI). At 131–144 (QESFEEAVCIKITA) the chain is on the cytoplasmic side. The helical transmembrane segment at 145–165 (LMANVALIAPLLGPLVGAAWI) threads the bilayer. His166 is a topological domain (periplasmic). A helical transmembrane segment spans residues 167-187 (VLPWEGMFVLFAALAAISFFG). The Cytoplasmic segment spans residues 188–226 (LQRAMPETATRIGEKLSLKELGRDYKLVLKNGRFVAGAL). Residues 227–247 (ALGFVSLPLLAWIAQSPIIII) form a helical membrane-spanning segment. The Periplasmic portion of the chain corresponds to 248–255 (TGEQLSSY). A helical transmembrane segment spans residues 256-276 (EYGLLQVPIFGALIAGNLLLA). Residues 277 to 287 (RLTSRRTVRSL) lie on the Cytoplasmic side of the membrane. The helical transmembrane segment at 288–308 (IIMGGWPIMIGLLVAAAATVI) threads the bilayer. At 309-314 (SSHAYL) the chain is on the periplasmic side. A helical transmembrane segment spans residues 315-335 (WMTAGLSIYAFGIGLANAGLV). Residues 336-346 (RLTLFASDMSK) lie on the Cytoplasmic side of the membrane. The helical transmembrane segment at 347-367 (GTVSAAMGMLQMLIFTVGIEI) threads the bilayer. At 368–378 (SKHAWLNGGNG) the chain is on the periplasmic side. The chain crosses the membrane as a helical span at residues 379-399 (QFNLFNLVNGILWLSLMVIFL). Topologically, residues 400-410 (KDKQMGNSHEG) are cytoplasmic.

Belongs to the major facilitator superfamily. MdfA family. Monomer.

It is found in the cell inner membrane. Efflux pump driven by the proton motive force. Confers resistance to a broad spectrum of chemically unrelated drugs. The protein is Multidrug transporter MdfA (mdfA) of Shigella boydii serotype 4 (strain Sb227).